A 426-amino-acid polypeptide reads, in one-letter code: Pannexin-1 (426 aa).

Over 1 to 40 (MAIAHLATEYVFSDFLLKEPTEPKFKGLRLELAVDKMVTC) the chain is Cytoplasmic. C40 is subject to S-nitrosocysteine. The chain crosses the membrane as a helical span at residues 41–61 (IAVGLPLLLISLAFAQEISIG). The Extracellular portion of the chain corresponds to 62 to 106 (TQISCFSPSSFSWRQAAFVDSYCWAAVQQKNSLQSESGNLPLWLH). 2 cysteine pairs are disulfide-bonded: C66–C264 and C84–C245. A helical membrane pass occupies residues 107–127 (KFFPYILLLFAILLYLPALFW). At 128–216 (RFAAAPHLCS…HLIMKYISCR (89 aa)) the chain is on the cytoplasmic side. A Phosphotyrosine modification is found at Y198. The chain crosses the membrane as a helical span at residues 217–237 (LVTFAVVLLACIYLSYYFSLS). Residues 238-277 (SLSDEFLCSIKSGVLRNDSTIPDSFQCKLIAVGIFQLLSL) lie on the Extracellular side of the membrane. Residue N254 is glycosylated (N-linked (GlcNAc...) asparagine). Residues 278-298 (INLLVYALLVPVVIYTLFVPF) form a helical membrane-spanning segment. At 299-426 (RQKTDVLKVY…SRQRLLNSSC (128 aa)) the chain is on the cytoplasmic side. Position 346 is an S-nitrosocysteine (C346). Positions 407 to 426 (ETAANNGEKNSRQRLLNSSC) are disordered.

Belongs to the pannexin family. Homoheptameric. S-nitrosylation inhibits channel currents and ATP release. Post-translationally, N-glycosylation plays a role in cell surface targeting. Glycosylation at its extracellular surface makes unlikely that two oligomers could dock to form an intercellular channel such as in gap junctions. Exists in three glycosylation states: non-glycosylated (GLY0), high-mannose glycosylated (GLY1), and fully mature glycosylated (GLY2). In terms of processing, cleaved by CASP3 and CASP7 during apoptosis. Cleavage opens the channel for the release of metabolites and induces plasma membrane permeability during apoptosis. Phosphorylated at Tyr-198 by SRC. Phosphorylation activates ATP release. Constitutively phosphorylated in vascular smooth muscle cells. As to expression, expressed in the eye, thyroid, prostate, kidney and liver. Abundantly expressed in the CNS, including hippocampus, olfactory bulb, cortex, cerebellum and white matter.

Its subcellular location is the cell membrane. The protein localises to the endoplasmic reticulum membrane. It catalyses the reaction Ca(2+)(in) = Ca(2+)(out). It carries out the reaction ATP(in) = ATP(out). The catalysed reaction is K(+)(in) = K(+)(out). The enzyme catalyses chloride(in) = chloride(out). It catalyses the reaction iodide(out) = iodide(in). It carries out the reaction Na(+)(in) = Na(+)(out). The catalysed reaction is nitrate(in) = nitrate(out). The enzyme catalyses L-aspartate(out) = L-aspartate(in). It catalyses the reaction L-glutamate(out) = L-glutamate(in). It carries out the reaction D-gluconate(in) = D-gluconate(out). The catalysed reaction is spermidine(in) = spermidine(out). In terms of biological role, ion channel involved in a variety of physiological functions such as blood pressure regulation, apoptotic cell clearance and oogenesis. Forms anion-selective channels with relatively low conductance and an order of permeabilities: nitrate&gt;iodide&gt;chlroride&gt;&gt;aspartate=glutamate=gluconate. Can release ATP upon activation through phosphorylation or cleavage at C-terminus. May play a role as a Ca(2+)-leak channel to regulate ER Ca(2+) homeostasis. Functionally, during apoptosis, the C terminal tail is cleaved by caspases, which opens the main pore acting as a large-pore ATP efflux channel with a broad distribution, which allows the regulated release of molecules and ions smaller than 1 kDa, such as nucleotides ATP and UTP, and selective plasma membrane permeability to attract phagocytes that engulf the dying cells. This Rattus norvegicus (Rat) protein is Pannexin-1 (Panx1).